A 333-amino-acid chain; its full sequence is Outer membrane protein assembly factor BamC (333 aa).

Residues 1–18 form the signal peptide; the sequence is MKKCLFPLSVLAVIVATG. The N-palmitoyl cysteine moiety is linked to residue Cys-19. Cys-19 carries the S-diacylglycerol cysteine lipid modification.

The protein belongs to the BamC family. Part of the Bam complex.

It localises to the cell outer membrane. Its function is as follows. Part of the outer membrane protein assembly complex, which is involved in assembly and insertion of beta-barrel proteins into the outer membrane. This Actinobacillus succinogenes (strain ATCC 55618 / DSM 22257 / CCUG 43843 / 130Z) protein is Outer membrane protein assembly factor BamC.